The chain runs to 208 residues: Protein-methionine-sulfoxide reductase heme-binding subunit MsrQ (208 aa).

The next 6 helical transmembrane spans lie at 16-36 (IAVF…FVGG), 53-73 (WGLI…LWGW), 82-102 (MVGL…IGLD), 118-138 (TYIT…VTST), 156-176 (LVYP…KADL), and 178-198 (EPLI…VPAV).

The protein belongs to the MsrQ family. Heterodimer of a catalytic subunit (MsrP) and a heme-binding subunit (MsrQ). Requires FMN as cofactor. Heme b serves as cofactor.

It localises to the cell inner membrane. In terms of biological role, part of the MsrPQ system that repairs oxidized periplasmic proteins containing methionine sulfoxide residues (Met-O), using respiratory chain electrons. Thus protects these proteins from oxidative-stress damage caused by reactive species of oxygen and chlorine generated by the host defense mechanisms. MsrPQ is essential for the maintenance of envelope integrity under bleach stress, rescuing a wide series of structurally unrelated periplasmic proteins from methionine oxidation. MsrQ provides electrons for reduction to the reductase catalytic subunit MsrP, using the quinone pool of the respiratory chain. This is Protein-methionine-sulfoxide reductase heme-binding subunit MsrQ from Rhodospirillum rubrum (strain ATCC 11170 / ATH 1.1.1 / DSM 467 / LMG 4362 / NCIMB 8255 / S1).